A 291-amino-acid polypeptide reads, in one-letter code: Peptide methionine sulfoxide reductase MsrB/MsrA (291 aa).

Residues 1–124 (MLANLQHLSD…NSAALRFVAR (124 aa)) form the MsrB domain. Catalysis depends on cysteine 113, which acts as the Nucleophile. Positions 127–284 (GTALFAAGCF…PGGYCHVSLH (158 aa)) are peptide methionine sulfoxide reductase A. The active site involves cysteine 135.

This sequence in the N-terminal section; belongs to the MsrB Met sulfoxide reductase family. In the C-terminal section; belongs to the MsrA Met sulfoxide reductase family.

It carries out the reaction L-methionyl-[protein] + [thioredoxin]-disulfide + H2O = L-methionyl-(R)-S-oxide-[protein] + [thioredoxin]-dithiol. The catalysed reaction is L-methionyl-[protein] + [thioredoxin]-disulfide + H2O = L-methionyl-(S)-S-oxide-[protein] + [thioredoxin]-dithiol. The enzyme catalyses [thioredoxin]-disulfide + L-methionine + H2O = L-methionine (S)-S-oxide + [thioredoxin]-dithiol. In terms of biological role, has an important function as a repair enzyme for proteins that have been inactivated by oxidation. Catalyzes the reversible oxidation-reduction of methionine sulfoxide in proteins to methionine. The polypeptide is Peptide methionine sulfoxide reductase MsrB/MsrA (msrAB) (Treponema pallidum (strain Nichols)).